We begin with the raw amino-acid sequence, 388 residues long: Acyl-CoA dehydrogenase fadE12 (388 aa).

This sequence belongs to the acyl-CoA dehydrogenase family. Requires FAD as cofactor.

The enzyme catalyses a 2,3-saturated acyl-CoA + A = a 2,3-dehydroacyl-CoA + AH2. In Mycobacterium bovis (strain ATCC BAA-935 / AF2122/97), this protein is Acyl-CoA dehydrogenase fadE12 (fadE12).